The following is a 401-amino-acid chain: Glutamyl-tRNA reductase (401 aa).

Substrate is bound by residues 45–48, S101, 106–108, and Q112; these read TCNR and EDQ. Catalysis depends on C46, which acts as the Nucleophile. Residue 177-182 participates in NADP(+) binding; it reads GYGEVG.

Belongs to the glutamyl-tRNA reductase family. Homodimer.

The catalysed reaction is (S)-4-amino-5-oxopentanoate + tRNA(Glu) + NADP(+) = L-glutamyl-tRNA(Glu) + NADPH + H(+). It participates in porphyrin-containing compound metabolism; protoporphyrin-IX biosynthesis; 5-aminolevulinate from L-glutamyl-tRNA(Glu): step 1/2. Functionally, catalyzes the NADPH-dependent reduction of glutamyl-tRNA(Glu) to glutamate 1-semialdehyde (GSA). This chain is Glutamyl-tRNA reductase, found in Clostridium beijerinckii (strain ATCC 51743 / NCIMB 8052) (Clostridium acetobutylicum).